A 353-amino-acid polypeptide reads, in one-letter code: Inositol-tetrakisphosphate 1-kinase 3 (353 aa).

The interval 1–25 (MKLTDNEEITMNGTREMETTEQETS) is disordered. Residues K50 and K92 each coordinate 1D-myo-inositol 1,3,4-trisphosphate. The ATP site is built by R127 and K177. The 213-residue stretch at 138 to 350 (NLSDSNGRVG…QSQCKKRALA (213 aa)) folds into the ATP-grasp domain. Positions 188 and 220 each coordinate 1D-myo-inositol 1,3,4-trisphosphate. ATP contacts are provided by residues 209–220 (QEFVNHGGVLFK) and S235. Residues D300, D315, and N317 each contribute to the Mg(2+) site. N317 is a 1D-myo-inositol 1,3,4-trisphosphate binding site.

Belongs to the ITPK1 family. In terms of assembly, monomer. The cofactor is Mg(2+). Highly expressed in leaves and flowers, and at lower levels in roots, stems, cauline leaves and siliques.

The catalysed reaction is 1D-myo-inositol 3,4,5,6-tetrakisphosphate + ATP = 1D-myo-inositol 1,3,4,5,6-pentakisphosphate + ADP + H(+). It catalyses the reaction 1D-myo-inositol 1,3,4-trisphosphate + ATP = 1D-myo-inositol 1,3,4,5-tetrakisphosphate + ADP + H(+). The enzyme catalyses 1D-myo-inositol 1,3,4-trisphosphate + ATP = 1D-myo-inositol 1,3,4,6-tetrakisphosphate + ADP + H(+). Functionally, kinase that can phosphorylate various inositol polyphosphate such as Ins(3,4,5,6)P4 or Ins(1,3,4)P3. Phosphorylates Ins(3,4,5,6)P4 to form InsP5. This reaction is thought to have regulatory importance, since Ins(3,4,5,6)P4 is an inhibitor of plasma membrane Ca(2+)-activated Cl(-) channels, while Ins(1,3,4,5,6)P5 is not. Also phosphorylates Ins(1,3,4)P3 or a racemic mixture of Ins(1,4,6)P3 and Ins(3,4,6)P3 to form InsP4. Ins(1,3,4,6)P4 is an essential molecule in the hexakisphosphate (InsP6) pathway. This chain is Inositol-tetrakisphosphate 1-kinase 3 (ITPK3), found in Arabidopsis thaliana (Mouse-ear cress).